We begin with the raw amino-acid sequence, 434 residues long: Trigger factor (434 aa).

Residues 160–245 (GDKVKMNFVG…LTEVQAANLP (86 aa)) form the PPIase FKBP-type domain.

This sequence belongs to the FKBP-type PPIase family. Tig subfamily.

It localises to the cytoplasm. It carries out the reaction [protein]-peptidylproline (omega=180) = [protein]-peptidylproline (omega=0). Involved in protein export. Acts as a chaperone by maintaining the newly synthesized protein in an open conformation. Functions as a peptidyl-prolyl cis-trans isomerase. This is Trigger factor from Shewanella baltica (strain OS185).